The following is a 120-amino-acid chain: NAD(P)H-quinone oxidoreductase subunit 3 (120 aa).

Transmembrane regions (helical) follow at residues 6–26 (GYDAFLGFLLIAAAVPALALI), 64–84 (MFALVFVIFDVETVFLYPWAV), and 89–109 (LGVLAFIEALIFITILLVALA).

Belongs to the complex I subunit 3 family. In terms of assembly, NDH-1 can be composed of about 15 different subunits; different subcomplexes with different compositions have been identified which probably have different functions.

It is found in the cellular thylakoid membrane. It carries out the reaction a plastoquinone + NADH + (n+1) H(+)(in) = a plastoquinol + NAD(+) + n H(+)(out). The catalysed reaction is a plastoquinone + NADPH + (n+1) H(+)(in) = a plastoquinol + NADP(+) + n H(+)(out). Functionally, NDH-1 shuttles electrons from an unknown electron donor, via FMN and iron-sulfur (Fe-S) centers, to quinones in the respiratory and/or the photosynthetic chain. The immediate electron acceptor for the enzyme in this species is believed to be plastoquinone. Couples the redox reaction to proton translocation, and thus conserves the redox energy in a proton gradient. Cyanobacterial NDH-1 also plays a role in inorganic carbon-concentration. This is NAD(P)H-quinone oxidoreductase subunit 3 from Parasynechococcus marenigrum (strain WH8102).